The sequence spans 557 residues: Dihydroxy-acid dehydratase (557 aa).

Asp-78 lines the Mg(2+) pocket. Cys-119 contacts [2Fe-2S] cluster. Mg(2+)-binding residues include Asp-120 and Lys-121. Lys-121 carries the post-translational modification N6-carboxylysine. Cys-192 serves as a coordination point for [2Fe-2S] cluster. Glu-442 serves as a coordination point for Mg(2+). The active-site Proton acceptor is Ser-468.

Belongs to the IlvD/Edd family. In terms of assembly, homodimer. [2Fe-2S] cluster serves as cofactor. Requires Mg(2+) as cofactor.

The catalysed reaction is (2R)-2,3-dihydroxy-3-methylbutanoate = 3-methyl-2-oxobutanoate + H2O. It carries out the reaction (2R,3R)-2,3-dihydroxy-3-methylpentanoate = (S)-3-methyl-2-oxopentanoate + H2O. It functions in the pathway amino-acid biosynthesis; L-isoleucine biosynthesis; L-isoleucine from 2-oxobutanoate: step 3/4. It participates in amino-acid biosynthesis; L-valine biosynthesis; L-valine from pyruvate: step 3/4. Its function is as follows. Functions in the biosynthesis of branched-chain amino acids. Catalyzes the dehydration of (2R,3R)-2,3-dihydroxy-3-methylpentanoate (2,3-dihydroxy-3-methylvalerate) into 2-oxo-3-methylpentanoate (2-oxo-3-methylvalerate) and of (2R)-2,3-dihydroxy-3-methylbutanoate (2,3-dihydroxyisovalerate) into 2-oxo-3-methylbutanoate (2-oxoisovalerate), the penultimate precursor to L-isoleucine and L-valine, respectively. This Bacillus cereus (strain ATCC 10987 / NRS 248) protein is Dihydroxy-acid dehydratase.